The chain runs to 256 residues: Floral homeotic protein APETALA 1 (256 aa).

The MADS-box domain maps to 1-61 (MGRGRVQLKR…GKLFEYSTDS (61 aa)). The 91-residue stretch at 88-178 (NTNWSMEYNR…SKQIKEREKI (91 aa)) folds into the K-box domain. A disordered region spans residues 184–206 (EQWDQQNHGHNMPPPPPPQQHQI).

In terms of assembly, homodimer capable of binding to CArG-box sequences.

The protein resides in the nucleus. Functionally, transcription factor that promotes early floral meristem identity in synergy with LEAFY. Displays a redundant function with CAULIFLOWER in the up-regulation of LEAFY. Required subsequently for the transition of an inflorescence meristem into a floral meristem, and for the normal development of sepals and petals in flowers. Regulates positively B class homeotic proteins. This Arabidopsis lyrata subsp. lyrata (Lyre-leaved rock-cress) protein is Floral homeotic protein APETALA 1 (AP1).